Consider the following 509-residue polypeptide: MSQFAREIVRNAIYNTSSPDADSVSLRKATTTILLIGVTYCILVGIYRVTLHPLAKYPGPKLAAVTRLWHSYHLCTGDIVSVLSRAHEAYGPVLRIAPDEVLFISSRAWDDIYGARPGKPEMDKDTPLYKGPTAPHSIVTVDGELHRFYRRLLAKGFSDAALREQEPVIQRNINLLVEKLHKEVAAGKTPEMTAWFNYATFDLIGELAFGETYGCLENSHYHPWVEMILEVMKLRAMTHAVGYYPWIFHILMWFVPKSLREKFVTHRRYTHDKVQRRMDQKIHYKDLTTNLVDPQNGLERYEIDGNCSTLIIAGSETTATALSATLYFLTQNENAKRKVIGEIRTTFNNAGDINSISVNQLKYLSACMNEALRIFPPGPAVFPRRVPQGGDFIDGHWIPGGTQVGIAHYCINRSRRNFVDPDKFIPERWLGDPTYQTDDRHAVQPFSYGPRNCIAHNLARLEMRLVLARLIWEFDWELAPGSERWEEEALVFNVWSTKPLMIKFTPVAR.

Asn-15 carries an N-linked (GlcNAc...) asparagine glycan. The helical transmembrane segment at Thr-31–Leu-51 threads the bilayer. Residues Asn-306 and Asn-412 are each glycosylated (N-linked (GlcNAc...) asparagine). Position 453 (Cys-453) interacts with heme.

This sequence belongs to the cytochrome P450 family. Heme is required as a cofactor.

The protein localises to the membrane. It functions in the pathway secondary metabolite biosynthesis. Its function is as follows. Cytochrome P450 monooxygenase; part of the gene cluster that mediates the biosynthesis of the fungal neurotoxin cyclopiazonic acid (CPA), a nanomolar inhibitor of Ca(2+)-ATPase with a unique pentacyclic indole tetramic acid scaffold. The hybrid two module polyketide synthase-nonribosomal peptide synthetase (PKS-NRPS) cpaS incorporates acetyl-CoA, malonyl-CoA, and tryptophan (Trp) and utilizes a C-terminal redox-incompetent reductase domain to make and release the tryptophan tetramic acid, cyclo-acetoacetyl-L-tryptophan (c-AATrp), as the first intermediate in the pathway. CpaS catalyzes a Dieckmann-type cyclization on the N-acetoacetyl-Trp intermediate bound in thioester linkage to the phosphopantetheinyl arm of the T domain to form and release c-AATrp. CpaD then regiospecifically dimethylallylates c-AATrp to form beta-cyclopiazonic acid. CpaD discriminates against free Trp but accepts tryptophan-containing thiohydantoins, diketopiperazines, and linear peptides as substrates for C4-prenylation and also acts as a regiospecific O-dimethylallyltransferase (DMAT) on a tyrosine-derived tetramic acid. The beta-cyclopiazonate dehydrogenase cpaO then carries out the dehydrogenation of beta-CPA to yield an unstable enimine product, which is captured by intramolecular cyclization to create the pentacyclic fused scaffold of alpha-cyclopiazonate. Finally, the cytochrome P450 monooxygenase cpaH mediates the conversion of CPA into the less toxic 2-oxocyclopiazonic acid, the end product of the CPA pathway in A.oryza. In Aspergillus oryzae (Yellow koji mold), this protein is Cytochrome P450 monooxygenase cpaH.